Reading from the N-terminus, the 152-residue chain is Histone H2B.1 (152 aa).

The span at 1-28 (MAPKAEKKPAAKKPAEEEPAAEKAEKTP) shows a compositional bias: basic and acidic residues. A disordered region spans residues 1–60 (MAPKAEKKPAAKKPAEEEPAAEKAEKTPAGKKPKAEKRLPAGKSAAKEGGDKKGKKKAKK). N6-acetyllysine occurs at positions 7 and 37. Residue Lys-148 forms a Glycyl lysine isopeptide (Lys-Gly) (interchain with G-Cter in ubiquitin) linkage.

Belongs to the histone H2B family. The nucleosome is a histone octamer containing two molecules each of H2A, H2B, H3 and H4 assembled in one H3-H4 heterotetramer and two H2A-H2B heterodimers. The octamer wraps approximately 147 bp of DNA. Post-translationally, can be acetylated to form H2BK6ac and H2BK33ac. In terms of processing, monoubiquitinated to form H2BK143ub1; may give a specific tag for epigenetic transcriptional activation.

Its subcellular location is the nucleus. It is found in the chromosome. Its function is as follows. Core component of nucleosome. Nucleosomes wrap and compact DNA into chromatin, limiting DNA accessibility to the cellular machineries which require DNA as a template. Histones thereby play a central role in transcription regulation, DNA repair, DNA replication and chromosomal stability. DNA accessibility is regulated via a complex set of post-translational modifications of histones, also called histone code, and nucleosome remodeling. The polypeptide is Histone H2B.1 (Triticum aestivum (Wheat)).